The primary structure comprises 470 residues: Tert-butanol monooxygenase / tert-amyl alcohol desaturase oxygenase subunit (470 aa).

A Rieske domain is found at 51–155 (WQPVCLSQEL…AFERNGLVFA (105 aa)). Positions 91, 93, 110, and 113 each coordinate [2Fe-2S] cluster.

Belongs to the bacterial ring-hydroxylating dioxygenase alpha subunit family. In terms of assembly, this two-component enzyme is composed of an oxygenase (MdpJ) and a reductase (MdpK). It depends on [2Fe-2S] cluster as a cofactor.

The catalysed reaction is tert-butanol + NADPH + O2 + H(+) = 2-methylpropane-1,2-diol + NADP(+) + H2O. It catalyses the reaction 2-methylbutan-2-ol + NADPH + O2 + H(+) = 3-hydroxy-3-methylbut-1-ene + NADP(+) + 2 H2O. Functionally, oxygenase component of a two-component system involved in the degradation of tertiary alcohols such as tert-butyl alcohol (TBA) and tert-amyl alcohol (TAA). In the presence of TBA, catalyzes the hydroxylation of TBA to 2-methylpropane-1,2-diol. In the presence of TAA, functions as a desaturase, enabling the degradation of TAA and resulting in the formation of the hemiterpene 3-hydroxy-3-methylbut-1-ene. The specificity of the catalysis depends strongly on the molecule structure of the substrate, allowing either hydroxylation or desaturation reactions. Also catalyzes the desaturation of the tertiary alcohol 3-methyl-3-pentanol (a C6 homolog of TBA and TAA) to 3-methyl-1-penten-3-ol, with lower efficiency. In addition, can transform some secondary alcohols, including the hydroxylation of 2-propanol to 1,2-propanediol, and the desaturation of 2-butanol, 3-methyl-2-butanol and 3-pentanol. This chain is Tert-butanol monooxygenase / tert-amyl alcohol desaturase oxygenase subunit, found in Aquincola tertiaricarbonis.